The chain runs to 195 residues: FMN-dependent NADH:quinone oxidoreductase (195 aa).

FMN is bound by residues S10, 16-18 (SQS), 91-94 (MYNF), and 135-138 (TRGG).

It belongs to the azoreductase type 1 family. Homodimer. It depends on FMN as a cofactor.

The enzyme catalyses 2 a quinone + NADH + H(+) = 2 a 1,4-benzosemiquinone + NAD(+). The catalysed reaction is N,N-dimethyl-1,4-phenylenediamine + anthranilate + 2 NAD(+) = 2-(4-dimethylaminophenyl)diazenylbenzoate + 2 NADH + 2 H(+). Its function is as follows. Quinone reductase that provides resistance to thiol-specific stress caused by electrophilic quinones. In terms of biological role, also exhibits azoreductase activity. Catalyzes the reductive cleavage of the azo bond in aromatic azo compounds to the corresponding amines. This Vibrio vulnificus (strain YJ016) protein is FMN-dependent NADH:quinone oxidoreductase.